We begin with the raw amino-acid sequence, 686 residues long: Hexamerin 70c (686 aa).

The signal sequence occupies residues 1-19 (MLSKVVLLVALAAICGAQG). A Hemocyanin N-terminal domain is found at 32 to 155 (FLHKQKKIFD…IAVLYRPDTK (124 aa)). The region spanning 161 to 431 (AIYEIYPNYF…MLYQNILSYF (271 aa)) is the Hemocyanin middle domain. 2 N-linked (GlcNAc...) asparagine glycosylation sites follow: asparagine 205 and asparagine 662. A Hemocyanin C-terminal domain is found at 440 to 676 (QYSQSELQMP…NMYFKDVFIY (237 aa)).

This sequence belongs to the hemocyanin/hexamerin family. In terms of assembly, probable homohexamer. As to expression, expressed in the fat body and secreted into the hemolymph (at protein level). Present in trophocytes and oenocytes of the fat body (at protein level). Not expressed in ovary or testis.

Its subcellular location is the secreted. The protein resides in the nucleus. The protein localises to the cytoplasm. It is found in the cytoplasmic granule. Its function is as follows. Storage protein that may function as a nutrient supply to compensate for lack of dietary proteins during metamorphosis and egg production. In Apis mellifera (Honeybee), this protein is Hexamerin 70c.